The chain runs to 376 residues: MAYTTFSQTKNDQLKEPMFFGQPVNVARYDQQKYDIFEKLIEKQLSFFWRPEEVDVSRDRIDYQALPEHEKHIFISNLKYQTLLDSIQGRSPNVALLPLISIPELETWVETWAFSETIHSRSYTHIIRNIVNDPAVVFDDIVTNEQIQKRAEGISAYYDELIEMTSYWHLLGEGTHTVNGKTVVVNLRELKKKLYLCLMSVNALEAIRFYVSFACSFAFAERELMEGNAKIIRLIARDEALHLTGTQHMLNLLRSGVDDPEMAEIAEECKQECYDLFVQAAQQEKEWADYLFRDGSMIGLNKDILCQYVEYITNIRMQAVGLDLPFQTRSNPIPWINTWLVSDNVQVAPQEVEVSSYLVGQIDSEVDTDDLSNFQL.

Residues aspartate 85, glutamate 116, and histidine 119 each coordinate Fe cation. Residue tyrosine 123 is part of the active site. Residues glutamate 205, glutamate 239, and histidine 242 each coordinate Fe cation.

This sequence belongs to the ribonucleoside diphosphate reductase small chain family. As to quaternary structure, tetramer of two alpha (R1) and two beta (R2) subunits. The B1 protein is a dimer of alpha subunits. A radical transfer pathway occurs between Tyr-123 of R2 and R1. Requires Fe cation as cofactor.

The catalysed reaction is a 2'-deoxyribonucleoside 5'-diphosphate + [thioredoxin]-disulfide + H2O = a ribonucleoside 5'-diphosphate + [thioredoxin]-dithiol. Provides the precursors necessary for DNA synthesis. Catalyzes the biosynthesis of deoxyribonucleotides from the corresponding ribonucleotides. R2 contains the tyrosyl radical required for catalysis. The chain is Ribonucleoside-diphosphate reductase 1 subunit beta (nrdB) from Salmonella typhimurium (strain LT2 / SGSC1412 / ATCC 700720).